A 256-amino-acid polypeptide reads, in one-letter code: Homeobox-leucine zipper protein HOX18 (256 aa).

Residues 52-117 (YDHGRDEEQA…GGGGGTRKKL (66 aa)) form a disordered region. Residues 102 to 112 (DGGSGSGGGGG) are compositionally biased toward gly residues. The homeobox DNA-binding region spans 112-171 (GTRKKLQLTKEQSTLLEDSFRVHNILSHAQKHELARQLKLKPRQVEVWFQNRRARTKLKQ). The leucine-zipper stretch occupies residues 170–214 (KQTEVDCEFLKRCCESLTEENKQLKHELMELRRLASAAAAAAGSQ).

The protein belongs to the HD-ZIP homeobox family. Class II subfamily. Expressed in roots, leaf sheaths and blades and panicles.

The protein resides in the nucleus. Functionally, probable transcription factor. In Oryza sativa subsp. indica (Rice), this protein is Homeobox-leucine zipper protein HOX18 (HOX18).